Consider the following 251-residue polypeptide: D-aminoacyl-tRNA deacylase (251 aa).

This sequence belongs to the DtdA deacylase family. Monomer. The cofactor is Zn(2+).

It catalyses the reaction a D-aminoacyl-tRNA + H2O = a tRNA + a D-alpha-amino acid + H(+). The enzyme catalyses glycyl-tRNA(Ala) + H2O = tRNA(Ala) + glycine + H(+). Functionally, D-aminoacyl-tRNA deacylase with broad substrate specificity. By recycling D-aminoacyl-tRNA to D-amino acids and free tRNA molecules, this enzyme counteracts the toxicity associated with the formation of D-aminoacyl-tRNA entities in vivo. The protein is D-aminoacyl-tRNA deacylase of Pyrobaculum calidifontis (strain DSM 21063 / JCM 11548 / VA1).